Here is a 268-residue protein sequence, read N- to C-terminus: Glucosamine-6-phosphate deaminase (268 aa).

Asp72 acts as the Proton acceptor; for enolization step in catalysis. The For ring-opening step role is filled by Asp141. Residue His143 is the Proton acceptor; for ring-opening step of the active site. The active-site For ring-opening step is Glu148.

The protein belongs to the glucosamine/galactosamine-6-phosphate isomerase family. NagB subfamily.

The enzyme catalyses alpha-D-glucosamine 6-phosphate + H2O = beta-D-fructose 6-phosphate + NH4(+). It functions in the pathway amino-sugar metabolism; N-acetylneuraminate degradation; D-fructose 6-phosphate from N-acetylneuraminate: step 5/5. With respect to regulation, allosterically activated by N-acetylglucosamine 6-phosphate (GlcNAc6P). In terms of biological role, catalyzes the reversible isomerization-deamination of glucosamine 6-phosphate (GlcN6P) to form fructose 6-phosphate (Fru6P) and ammonium ion. The chain is Glucosamine-6-phosphate deaminase from Borrelia garinii subsp. bavariensis (strain ATCC BAA-2496 / DSM 23469 / PBi) (Borreliella bavariensis).